The following is a 288-amino-acid chain: Putative alkaline ceramidase dcd3A (288 aa).

Residue Asn-23 is glycosylated (N-linked (GlcNAc...) asparagine). Helical transmembrane passes span 41–61 (IISL…GTGV), 78–98 (VILS…YHAT), 105–125 (LFDE…MVTV), 146–166 (HLLP…ILVI), 172–192 (ILQV…IYLI), 206–226 (SYLY…WVVE), and 240–260 (LHAF…QFLI).

Belongs to the alkaline ceramidase family.

The protein localises to the membrane. The sequence is that of Putative alkaline ceramidase dcd3A (dcd3A) from Dictyostelium discoideum (Social amoeba).